The chain runs to 458 residues: UDP-N-acetylmuramate--L-alanine ligase (458 aa).

Position 118 to 124 (Gly118 to Thr124) interacts with ATP.

This sequence belongs to the MurCDEF family.

The protein localises to the cytoplasm. The catalysed reaction is UDP-N-acetyl-alpha-D-muramate + L-alanine + ATP = UDP-N-acetyl-alpha-D-muramoyl-L-alanine + ADP + phosphate + H(+). It functions in the pathway cell wall biogenesis; peptidoglycan biosynthesis. Its function is as follows. Cell wall formation. This is UDP-N-acetylmuramate--L-alanine ligase from Clostridium botulinum (strain ATCC 19397 / Type A).